Consider the following 470-residue polypeptide: Neuraminidase (470 aa).

The Intravirion portion of the chain corresponds to 1–6; it reads MNPNQK. A helical membrane pass occupies residues 7-27; it reads IICISATGMTLSVVSLLVGIA. The segment at 11 to 33 is involved in apical transport and lipid raft association; the sequence is SATGMTLSVVSLLVGIANLGLNI. The Virion surface segment spans residues 28–470; sequence NLGLNIGLHY…HDGAEIIYFE (443 aa). The interval 36-88 is hypervariable stalk region; that stretch reads HYKVGDTPNVNIPNVNGTNSTTTIINNNTQNNFTNITNIIQSKGGERTFLNLT. 6 N-linked (GlcNAc...) asparagine; by host glycosylation sites follow: Asn51, Asn54, Asn62, Asn67, Asn70, and Asn86. The interval 91–470 is head of neuraminidase; it reads LCEVNSWHIL…HDGAEIIYFE (380 aa). 9 cysteine pairs are disulfide-bonded: Cys92-Cys419, Cys124-Cys129, Cys176-Cys194, Cys184-Cys231, Cys233-Cys238, Cys279-Cys292, Cys281-Cys290, Cys319-Cys337, and Cys423-Cys449. Arg118 contacts substrate. The N-linked (GlcNAc...) asparagine; by host glycan is linked to Asn146. Asp151 serves as the catalytic Proton donor/acceptor. Arg152 is a binding site for substrate. An N-linked (GlcNAc...) asparagine; by host glycan is attached at Asn201. 277–278 serves as a coordination point for substrate; it reads EE. Arg293 contacts substrate. Ca(2+) is bound by residues Asp294, Gly298, Asp325, and Pro348. Arg372 contacts substrate. Asn402 is a glycosylation site (N-linked (GlcNAc...) asparagine; by host). Tyr406 (nucleophile) is an active-site residue.

This sequence belongs to the glycosyl hydrolase 34 family. Homotetramer. The cofactor is Ca(2+). N-glycosylated.

It localises to the virion membrane. Its subcellular location is the host apical cell membrane. It carries out the reaction Hydrolysis of alpha-(2-&gt;3)-, alpha-(2-&gt;6)-, alpha-(2-&gt;8)- glycosidic linkages of terminal sialic acid residues in oligosaccharides, glycoproteins, glycolipids, colominic acid and synthetic substrates.. Its activity is regulated as follows. Inhibited by the neuraminidase inhibitors zanamivir (Relenza) and oseltamivir (Tamiflu). These drugs interfere with the release of progeny virus from infected cells and are effective against all influenza strains. Resistance to neuraminidase inhibitors is quite rare. In terms of biological role, catalyzes the removal of terminal sialic acid residues from viral and cellular glycoconjugates. Cleaves off the terminal sialic acids on the glycosylated HA during virus budding to facilitate virus release. Additionally helps virus spread through the circulation by further removing sialic acids from the cell surface. These cleavages prevent self-aggregation and ensure the efficient spread of the progeny virus from cell to cell. Otherwise, infection would be limited to one round of replication. Described as a receptor-destroying enzyme because it cleaves a terminal sialic acid from the cellular receptors. May facilitate viral invasion of the upper airways by cleaving the sialic acid moieties on the mucin of the airway epithelial cells. Likely to plays a role in the budding process through its association with lipid rafts during intracellular transport. May additionally display a raft-association independent effect on budding. Plays a role in the determination of host range restriction on replication and virulence. Sialidase activity in late endosome/lysosome traffic seems to enhance virus replication. This chain is Neuraminidase, found in Influenza A virus (strain A/Duck/England/1/1956 H11N6).